Reading from the N-terminus, the 484-residue chain is tRNA sulfurtransferase (484 aa).

Residues 63–167 (QAFGERLACI…GDKLYMVTKR (105 aa)) enclose the THUMP domain. ATP is bound by residues 185–186 (LI), Lys267, Gly289, and Gln298. Cys346 and Cys458 form a disulfide bridge. In terms of domain architecture, Rhodanese spans 406-484 (IDTNEVVIDI…GYHNVKVYRP (79 aa)). Cys458 serves as the catalytic Cysteine persulfide intermediate.

The protein belongs to the ThiI family.

The protein resides in the cytoplasm. The enzyme catalyses [ThiI sulfur-carrier protein]-S-sulfanyl-L-cysteine + a uridine in tRNA + 2 reduced [2Fe-2S]-[ferredoxin] + ATP + H(+) = [ThiI sulfur-carrier protein]-L-cysteine + a 4-thiouridine in tRNA + 2 oxidized [2Fe-2S]-[ferredoxin] + AMP + diphosphate. It carries out the reaction [ThiS sulfur-carrier protein]-C-terminal Gly-Gly-AMP + S-sulfanyl-L-cysteinyl-[cysteine desulfurase] + AH2 = [ThiS sulfur-carrier protein]-C-terminal-Gly-aminoethanethioate + L-cysteinyl-[cysteine desulfurase] + A + AMP + 2 H(+). The protein operates within cofactor biosynthesis; thiamine diphosphate biosynthesis. Its function is as follows. Catalyzes the ATP-dependent transfer of a sulfur to tRNA to produce 4-thiouridine in position 8 of tRNAs, which functions as a near-UV photosensor. Also catalyzes the transfer of sulfur to the sulfur carrier protein ThiS, forming ThiS-thiocarboxylate. This is a step in the synthesis of thiazole, in the thiamine biosynthesis pathway. The sulfur is donated as persulfide by IscS. The protein is tRNA sulfurtransferase of Shewanella sp. (strain MR-4).